Here is a 208-residue protein sequence, read N- to C-terminus: Probable GTP-binding protein EngB (208 aa).

The region spanning 29–203 is the EngB-type G domain; the sequence is EGREVAFAGR…WDKLGEWLGI (175 aa). GTP is bound by residues 37–44, 64–68, 82–85, 149–152, and 182–184; these read GRSNAGKS, GRTQL, DLPG, TKAD, and FSA. Mg(2+) is bound by residues Ser44 and Thr66.

Belongs to the TRAFAC class TrmE-Era-EngA-EngB-Septin-like GTPase superfamily. EngB GTPase family. Requires Mg(2+) as cofactor.

Its function is as follows. Necessary for normal cell division and for the maintenance of normal septation. The protein is Probable GTP-binding protein EngB of Alcanivorax borkumensis (strain ATCC 700651 / DSM 11573 / NCIMB 13689 / SK2).